A 386-amino-acid polypeptide reads, in one-letter code: N-acetylneuraminate epimerase (386 aa).

An N-terminal signal peptide occupies residues 1–29 (MGMQMKNFKKMMTLMALCFSVAITTSGYA). Kelch repeat units lie at residues 51–95 (VIYV…VFLN), 97–149 (ELYV…VKLN), 151–186 (TMVL…KVIY), 187–232 (NYFN…VMGN), 235–284 (LMLI…LAGA), 306–355 (QNYT…SYGD), and 357–386 (VFLI…LLIK). The active-site Proton acceptor is Glu241.

It belongs to the NanM family. In terms of assembly, homodimer.

The protein resides in the periplasm. It carries out the reaction N-acetyl-alpha-neuraminate = N-acetyl-beta-neuraminate. In terms of biological role, converts alpha-N-acetylneuranimic acid (Neu5Ac) to the beta-anomer, accelerating the equilibrium between the alpha- and beta-anomers. Probably facilitates sialidase-negative bacteria to compete successfully for limited amounts of extracellular Neu5Ac, which is likely taken up in the beta-anomer. In addition, the rapid removal of sialic acid from solution might be advantageous to the bacterium to damp down host responses. The chain is N-acetylneuraminate epimerase from Salmonella typhimurium (strain LT2 / SGSC1412 / ATCC 700720).